The primary structure comprises 70 residues: MTTIRVKENEPFDVALRRFKRTIEKLGLLTDLRAREFYEKPTAERKRKKAAAVKRNYKRIRAMQLPKKMY.

It belongs to the bacterial ribosomal protein bS21 family.

This Albidiferax ferrireducens (strain ATCC BAA-621 / DSM 15236 / T118) (Rhodoferax ferrireducens) protein is Small ribosomal subunit protein bS21.